The primary structure comprises 425 residues: CinA-like protein (425 aa).

Belongs to the CinA family.

This Mycobacterium marinum (strain ATCC BAA-535 / M) protein is CinA-like protein.